Reading from the N-terminus, the 291-residue chain is tRNA-cytidine(32) 2-sulfurtransferase (291 aa).

The PP-loop motif signature appears at 36 to 41; that stretch reads SGGKDS. [4Fe-4S] cluster is bound by residues C111, C114, and C202. The disordered stretch occupies residues 258–291; sequence RDPWLDAEDEEAEDCGEPPAGDGVVSLGGARGGR. Residues 262–273 show a composition bias toward acidic residues; sequence LDAEDEEAEDCG.

Belongs to the TtcA family. As to quaternary structure, homodimer. Requires Mg(2+) as cofactor. [4Fe-4S] cluster serves as cofactor.

The protein localises to the cytoplasm. The enzyme catalyses cytidine(32) in tRNA + S-sulfanyl-L-cysteinyl-[cysteine desulfurase] + AH2 + ATP = 2-thiocytidine(32) in tRNA + L-cysteinyl-[cysteine desulfurase] + A + AMP + diphosphate + H(+). It participates in tRNA modification. Functionally, catalyzes the ATP-dependent 2-thiolation of cytidine in position 32 of tRNA, to form 2-thiocytidine (s(2)C32). The sulfur atoms are provided by the cysteine/cysteine desulfurase (IscS) system. The chain is tRNA-cytidine(32) 2-sulfurtransferase from Anaeromyxobacter dehalogenans (strain 2CP-1 / ATCC BAA-258).